The following is a 626-amino-acid chain: Phosphomethylpyrimidine synthase (626 aa).

The tract at residues 1–22 (MTKQEKAINLSESAQVDQQSVQ) is disordered. Residues 10–22 (LSESAQVDQQSVQ) show a composition bias toward polar residues. Substrate-binding positions include asparagine 232, methionine 261, tyrosine 290, histidine 326, 346–348 (SRG), 387–390 (DGLR), and glutamate 426. Histidine 430 provides a ligand contact to Zn(2+). Tyrosine 453 is a substrate binding site. Histidine 494 serves as a coordination point for Zn(2+). Residues cysteine 574, cysteine 577, and cysteine 582 each coordinate [4Fe-4S] cluster.

It belongs to the ThiC family. In terms of assembly, homodimer. [4Fe-4S] cluster is required as a cofactor.

The catalysed reaction is 5-amino-1-(5-phospho-beta-D-ribosyl)imidazole + S-adenosyl-L-methionine = 4-amino-2-methyl-5-(phosphooxymethyl)pyrimidine + CO + 5'-deoxyadenosine + formate + L-methionine + 3 H(+). The protein operates within cofactor biosynthesis; thiamine diphosphate biosynthesis. Functionally, catalyzes the synthesis of the hydroxymethylpyrimidine phosphate (HMP-P) moiety of thiamine from aminoimidazole ribotide (AIR) in a radical S-adenosyl-L-methionine (SAM)-dependent reaction. The protein is Phosphomethylpyrimidine synthase of Pseudomonas putida (strain ATCC 700007 / DSM 6899 / JCM 31910 / BCRC 17059 / LMG 24140 / F1).